We begin with the raw amino-acid sequence, 513 residues long: PPE family protein PPE4 (513 aa).

Transmembrane regions (helical) follow at residues 233 to 253 (IIIAFLTNPIQALITYGPLLF), 277 to 297 (FLLPAGLGLGLAAIAFLPIVL), and 309 to 329 (LAAAAVAAGSVWPAVSMAVTG). Disordered stretches follow at residues 395–446 (AAAA…ERGA) and 469–513 (LAGD…HDSK).

Belongs to the mycobacterial PPE family.

Its subcellular location is the cell membrane. Important for the siderophore-mediated iron-acquisition function of ESX-3. The protein is PPE family protein PPE4 (PPE4) of Mycobacterium tuberculosis (strain CDC 1551 / Oshkosh).